Here is a 696-residue protein sequence, read N- to C-terminus: Elongation factor G (696 aa).

Positions 8–290 (ERYRNIGIMA…AVLDYLPSPL (283 aa)) constitute a tr-type G domain. GTP-binding positions include 17-24 (AHIDAGKT), 88-92 (DTPGH), and 142-145 (NKMD).

It belongs to the TRAFAC class translation factor GTPase superfamily. Classic translation factor GTPase family. EF-G/EF-2 subfamily.

The protein resides in the cytoplasm. Functionally, catalyzes the GTP-dependent ribosomal translocation step during translation elongation. During this step, the ribosome changes from the pre-translocational (PRE) to the post-translocational (POST) state as the newly formed A-site-bound peptidyl-tRNA and P-site-bound deacylated tRNA move to the P and E sites, respectively. Catalyzes the coordinated movement of the two tRNA molecules, the mRNA and conformational changes in the ribosome. The polypeptide is Elongation factor G (Nitrosomonas eutropha (strain DSM 101675 / C91 / Nm57)).